Consider the following 159-residue polypeptide: Endoribonuclease YbeY (159 aa).

Positions 126, 130, and 136 each coordinate Zn(2+).

This sequence belongs to the endoribonuclease YbeY family. Zn(2+) is required as a cofactor.

Its subcellular location is the cytoplasm. Single strand-specific metallo-endoribonuclease involved in late-stage 70S ribosome quality control and in maturation of the 3' terminus of the 16S rRNA. In Thermodesulfovibrio yellowstonii (strain ATCC 51303 / DSM 11347 / YP87), this protein is Endoribonuclease YbeY.